We begin with the raw amino-acid sequence, 214 residues long: Probable nicotinate-nucleotide adenylyltransferase (214 aa).

It belongs to the NadD family.

The enzyme catalyses nicotinate beta-D-ribonucleotide + ATP + H(+) = deamido-NAD(+) + diphosphate. Its pathway is cofactor biosynthesis; NAD(+) biosynthesis; deamido-NAD(+) from nicotinate D-ribonucleotide: step 1/1. Functionally, catalyzes the reversible adenylation of nicotinate mononucleotide (NaMN) to nicotinic acid adenine dinucleotide (NaAD). This chain is Probable nicotinate-nucleotide adenylyltransferase, found in Pelodictyon phaeoclathratiforme (strain DSM 5477 / BU-1).